A 142-amino-acid chain; its full sequence is Conidial pigment biosynthesis dehydratase EthD (142 aa).

Residues 25–121 (PGMSEAAYRE…PDHQKFADTS (97 aa)) form the EthD domain.

The protein belongs to the tpcK family.

It participates in pigment biosynthesis. In terms of biological role, dehydratase; part of the Pks1 gene cluster that mediates the biosynthesis of an anthraquinone derivative pigment that contributes to conidial pigmentation that provides protection from UV radiation, heat and cold stress. The polyketide synthase Pks1 produces 1-acetyl-2,4,6,8-tetrahydroxy-9,10-anthraquinone though condensation of acetyl-CoA with malonyl-CoA. The dehydratase EthD and the laccase Mlac1 further convert the anthraquinone derivative into the final conidial pigment. This Metarhizium robertsii (strain ARSEF 23 / ATCC MYA-3075) (Metarhizium anisopliae (strain ARSEF 23)) protein is Conidial pigment biosynthesis dehydratase EthD.